A 306-amino-acid polypeptide reads, in one-letter code: Type 2A encapsulin shell protein SrpI (306 aa).

The protein belongs to the encapsulin family. Family 2A subfamily. The 24.5 nm encapsulin nanocompartment is formed by 60 subunits; monomers form pentamers which assemble to form shells. There are 12 positively charged pores where the pentamers meet with a minimal pore diameter of 3.7 Angstroms as well 3-fold axis channels and dimer channels.

The protein localises to the encapsulin nanocompartment. Shell component of a type 2A encapsulin nanocompartment. Expression in E.coli generates nanocompartments with an average diameter of 25 nm. They can be disassembled by treatment with 6M guanidine hydrochloride and reassembled with cargo. The nanocompartment is probably involved in sulfur metabolism. Probably allows passage of cysteine into its interior; during growth in light the physiological pH is 8-8.4, about 30-54% of free cysteine (charge -1) would be able to pass through the shell. In Synechococcus elongatus (strain ATCC 33912 / PCC 7942 / FACHB-805) (Anacystis nidulans R2), this protein is Type 2A encapsulin shell protein SrpI.